We begin with the raw amino-acid sequence, 402 residues long: Bone morphogenetic protein 8A (402 aa).

An N-terminal signal peptide occupies residues 1-19; sequence MAARPGPLWLLGLTLCALG. The propeptide occupies 20-263; the sequence is GGGPGLRPPP…ASPSPIRTPR (244 aa). N-linked (GlcNAc...) asparagine glycans are attached at residues asparagine 158 and asparagine 343. 3 cysteine pairs are disulfide-bonded: cysteine 301–cysteine 367, cysteine 330–cysteine 399, and cysteine 334–cysteine 401.

The protein belongs to the TGF-beta family. As to quaternary structure, homodimer; disulfide-linked.

It is found in the secreted. Its function is as follows. Induces cartilage and bone formation. May be the osteoinductive factor responsible for the phenomenon of epithelial osteogenesis. Plays a role in calcium regulation and bone homeostasis. Signaling protein involved in regulation of thermogenesis and energy balance. Proposed to increase the peripheral response of brown adipose tissue (BAT) to adrenergic stimulation while acting centrally in the hypothalamus to increase sympathetic output to BAT. Functionally, growth factor of the TGF-beta superfamily that plays important role in various biological processes, including spermatogenesis, osteogenesis, steroidogenesis as well as regulation of energy balance. Initiates the canonical BMP signaling cascade by associating with type I receptor BMPR1A and type II receptor BMPR2. Once all three components are bound together in a complex at the cell surface, BMPR2 phosphorylates and activates BMPR1A. In turn, BMPR1A propagates signal by phosphorylating SMAD1/5/8 that travel to the nucleus and act as activators and repressors of transcription of target genes. In addition, activates the SMAD2/3 pathway. This is Bone morphogenetic protein 8A (BMP8A) from Homo sapiens (Human).